The sequence spans 430 residues: GTPase Obg (430 aa).

An Obg domain is found at 1–158 (MFVDQVKISL…LDVSLELKLL (158 aa)). A disordered region spans residues 118-145 (KGGRGGRGNSRFATPRNPAPDFSEKGEP). In terms of domain architecture, OBG-type G spans 159–329 (ADVGLVGFPS…LLYAIADKLE (171 aa)). Residues 165–172 (GFPSVGKS), 190–194 (FTTIK), 212–215 (DLPG), 282–285 (NKMD), and 310–312 (STI) each bind GTP. Mg(2+) is bound by residues Ser172 and Thr192. In terms of domain architecture, OCT spans 352 to 430 (KHTPSQDKFT…ILGGEFEFVE (79 aa)).

The protein belongs to the TRAFAC class OBG-HflX-like GTPase superfamily. OBG GTPase family. Monomer. Mg(2+) serves as cofactor.

The protein localises to the cytoplasm. Its function is as follows. An essential GTPase which binds GTP, GDP and possibly (p)ppGpp with moderate affinity, with high nucleotide exchange rates and a fairly low GTP hydrolysis rate. Plays a role in control of the cell cycle, stress response, ribosome biogenesis and in those bacteria that undergo differentiation, in morphogenesis control. This is GTPase Obg from Staphylococcus aureus (strain bovine RF122 / ET3-1).